Consider the following 231-residue polypeptide: Glutathione-specific gamma-glutamylcyclotransferase (231 aa).

Residue 49–54 coordinates substrate; the sequence is IFGYGS. Glutamate 127 (proton acceptor) is an active-site residue.

This sequence belongs to the gamma-glutamylcyclotransferase family. ChaC subfamily.

It carries out the reaction glutathione = L-cysteinylglycine + 5-oxo-L-proline. Its function is as follows. Catalyzes the cleavage of glutathione into 5-oxo-L-proline and a Cys-Gly dipeptide. Acts specifically on glutathione, but not on other gamma-glutamyl peptides. In Escherichia coli (strain K12), this protein is Glutathione-specific gamma-glutamylcyclotransferase.